The following is a 190-amino-acid chain: MGLLDAKISNHNVLVTSVDNVLNWARLSSLWPMGFGLACCAIEMMATNASNYDLERFGIFPRSSPRQSDLMIVAGTVTMKMAERVIRLYEQMPEPRYVLSMGSCSNCGGPYWKHGYHVLKGVDRIIPVDVYVPGCPPRPEALIGGLMKVQELIRMEQIGISRVEALKKLEEKNIDPGQLIEDARKGAMAS.

4 residues coordinate [4Fe-4S] cluster: Cys-39, Cys-40, Cys-104, and Cys-135.

Belongs to the complex I 20 kDa subunit family. As to quaternary structure, NDH-1 is composed of 14 different subunits. Subunits NuoB, C, D, E, F, and G constitute the peripheral sector of the complex. [4Fe-4S] cluster serves as cofactor.

It is found in the cell inner membrane. The enzyme catalyses a quinone + NADH + 5 H(+)(in) = a quinol + NAD(+) + 4 H(+)(out). Functionally, NDH-1 shuttles electrons from NADH, via FMN and iron-sulfur (Fe-S) centers, to quinones in the respiratory chain. The immediate electron acceptor for the enzyme in this species is believed to be a menaquinone. Couples the redox reaction to proton translocation (for every two electrons transferred, four hydrogen ions are translocated across the cytoplasmic membrane), and thus conserves the redox energy in a proton gradient. The polypeptide is NADH-quinone oxidoreductase subunit B (Chlorobium phaeobacteroides (strain BS1)).